Consider the following 436-residue polypeptide: Protein translocase subunit SecY (436 aa).

Transmembrane regions (helical) follow at residues 19-39 (ILFT…TVPG), 68-88 (FSVF…VQLL), 116-136 (YISL…FNAL), 151-171 (LFIG…GEQI), 179-199 (GVSM…VKGI), 216-236 (IIFV…TTYV), 269-289 (VIPV…LQFL), 313-333 (GIAM…FVQI), 372-392 (VGSL…DLFG), and 395-415 (DTVA…IEGM).

This sequence belongs to the SecY/SEC61-alpha family. Component of the Sec protein translocase complex. Heterotrimer consisting of SecY, SecE and SecG subunits. The heterotrimers can form oligomers, although 1 heterotrimer is thought to be able to translocate proteins. Interacts with the ribosome. Interacts with SecDF, and other proteins may be involved. Interacts with SecA.

The protein resides in the cell membrane. In terms of biological role, the central subunit of the protein translocation channel SecYEG. Consists of two halves formed by TMs 1-5 and 6-10. These two domains form a lateral gate at the front which open onto the bilayer between TMs 2 and 7, and are clamped together by SecE at the back. The channel is closed by both a pore ring composed of hydrophobic SecY resides and a short helix (helix 2A) on the extracellular side of the membrane which forms a plug. The plug probably moves laterally to allow the channel to open. The ring and the pore may move independently. The polypeptide is Protein translocase subunit SecY (Streptococcus gordonii (strain Challis / ATCC 35105 / BCRC 15272 / CH1 / DL1 / V288)).